A 1024-amino-acid chain; its full sequence is Error-prone DNA polymerase (1024 aa).

This sequence belongs to the DNA polymerase type-C family. DnaE2 subfamily.

It is found in the cytoplasm. The enzyme catalyses DNA(n) + a 2'-deoxyribonucleoside 5'-triphosphate = DNA(n+1) + diphosphate. Functionally, DNA polymerase involved in damage-induced mutagenesis and translesion synthesis (TLS). It is not the major replicative DNA polymerase. In Vibrio vulnificus (strain YJ016), this protein is Error-prone DNA polymerase.